Consider the following 398-residue polypeptide: Acetate kinase (398 aa).

N9 provides a ligand contact to Mg(2+). Residue K16 coordinates ATP. R93 contacts substrate. D150 functions as the Proton donor/acceptor in the catalytic mechanism. ATP contacts are provided by residues 209–213, 284–286, and 329–333; these read HLGAG, DMR, and GIGEH. E382 serves as a coordination point for Mg(2+).

The protein belongs to the acetokinase family. Homodimer. Requires Mg(2+) as cofactor. Mn(2+) is required as a cofactor.

The protein localises to the cytoplasm. The catalysed reaction is acetate + ATP = acetyl phosphate + ADP. Its pathway is metabolic intermediate biosynthesis; acetyl-CoA biosynthesis; acetyl-CoA from acetate: step 1/2. Functionally, catalyzes the formation of acetyl phosphate from acetate and ATP. Can also catalyze the reverse reaction. The chain is Acetate kinase from Rhodopseudomonas palustris (strain TIE-1).